Reading from the N-terminus, the 397-residue chain is MVVLTICGGGNAAHTLAGIASNQPNMEVRVLTLYADEAERWIKSMETNDFTTIKYATGKDPVHLKTKPKLVTKNPEQGATGADIIVITVPAFAHAQYLTALKPHVKPGTVVVGFPGQPGFDFEIMKIWGDLAKQCTVMNFVSLPWACRIKEFGKSVEVLATKDMMFGSVRNGTVAPKMDPTAMIQGCLGPLPRLECSGHLLGMSIMAVNGMLHPSIMYNRWHDWDGKPVDAPPLFYHGLSQAGADLLSDVSNETIAIAKKVMEQRQGVDLSNVIHMHPYYIGAYPDDISDKSSLYTCINTNAGFKGLTHPCTKTADGKFVPDFTGRYFGEDIPFGLAVTRGIAEIAGCPTPNIDKIIEWAQKLMGKEYLVGGKFTGKDISATRAPQRYGFNTLDSIL.

It belongs to the lysopine/nopaline/octopine/opine/vitopine dehydrogenases family.

The enzyme catalyses tauropine + NAD(+) + H2O = taurine + pyruvate + NADH + H(+). Subject to substrate inhibition by pyruvate for the reverse reaction but not for the forward reaction of the tauropine dehydrogenase activity. Functionally, may play a role in maintaining a redox balance during environmental and functional hypoxia. Exhibits high specificity for taurine and in addition, requires both alpha amino group and C-2 carbon chain length as a critical factor for active site binding of the amino acid. A methyl group in the beta position may be critical for active site binding of the keto acid. In the reverse reaction requires NAD(H) for the activity but not NADP(H). The sequence is that of Tauropine dehydrogenase from Arabella iricolor (Opal worm).